We begin with the raw amino-acid sequence, 401 residues long: MACSTHLLSQSLYPLNRANPAAARGHLRFQASPSVRLGSGTSRRRALGLRVAASAEQGRRQVEVEYDLQAKFNKLADQIDQNAGITRLNLFSPCKINVFLRITGKRPDGFHDLASLFHVISLGDTIKFSLSPSKSKDRLSTNVAGVPVDESNLIIKALNLYRKKTGTDNFFWIHLDKKVPTGAGLGGGSSNAATALWAANQFSGCIASEKELQEWSGEIGSDIPFFFSQGAAYCTGRGEIVEDIRNPLPANLPMVLVKPPEACSTAEVYKRLRLEHTSQTDPLVLLKEITENGISQDACVNDLEPPAFEVLPSLKRLKKRIIAANRGDYDAVFMSGSGSTIVGIGSPDPPAFVYDDDDYKDTFVSEACFLTRNENEWYREPISSKITSEEDLPPEVASVSD.

Residues 1-52 constitute a chloroplast transit peptide; that stretch reads MACSTHLLSQSLYPLNRANPAAARGHLRFQASPSVRLGSGTSRRRALGLRVA. 180 to 190 lines the ATP pocket; it reads PTGAGLGGGSS.

It belongs to the GHMP kinase family. IspE subfamily.

It localises to the plastid. It is found in the chloroplast stroma. The catalysed reaction is 4-CDP-2-C-methyl-D-erythritol + ATP = 4-CDP-2-C-methyl-D-erythritol 2-phosphate + ADP + H(+). The protein operates within isoprenoid biosynthesis; isopentenyl diphosphate biosynthesis via DXP pathway; isopentenyl diphosphate from 1-deoxy-D-xylulose 5-phosphate: step 3/6. Its function is as follows. Enzyme of the plastid non-mevalonate pathway for isoprenoid biosynthesis that catalyzes the phosphorylation of the position 2 hydroxy group of 4-diphosphocytidyl-2C-methyl-D-erythritol. Is essential for chloroplast development. The chain is 4-diphosphocytidyl-2-C-methyl-D-erythritol kinase, chloroplastic (ISPE) from Oryza sativa subsp. japonica (Rice).